Reading from the N-terminus, the 509-residue chain is Dihydrolipoyl dehydrogenase, mitochondrial (509 aa).

A mitochondrion-targeting transit peptide spans 1-35 (MQSWSRVYCSLVKRGHFSRISHGLQGVSVVPLRTY). Lysine 66 bears the N6-acetyllysine; alternate mark. An N6-succinyllysine; alternate modification is found at lysine 66. FAD-binding positions include 71–80 (EKNETLGGTC) and lysine 89. Cysteine 80 and cysteine 85 form a disulfide bridge. Lysine 104, lysine 122, lysine 132, and lysine 143 each carry N6-acetyllysine; alternate. N6-succinyllysine; alternate is present on residues lysine 104, lysine 122, lysine 132, and lysine 143. Glycine 154 provides a ligand contact to FAD. 2 positions are modified to N6-succinyllysine: lysine 159 and lysine 166. Residue 183-185 (TGS) coordinates FAD. Residues 220–227 (GAGVIGVE) and glutamate 243 each bind NAD(+). 2 positions are modified to N6-succinyllysine: lysine 273 and lysine 277. Valine 278 is an NAD(+) binding site. Serine 285 and serine 297 each carry phosphoserine. Glycine 314 provides a ligand contact to NAD(+). Lysine 346 is subject to N6-acetyllysine. Residues aspartate 355 and 361–364 (MLAH) contribute to the FAD site. Lysine 410 is modified (N6-acetyllysine; alternate). Lysine 410 carries the N6-succinyllysine; alternate modification. 2 positions are modified to N6-acetyllysine: lysine 417 and lysine 420. Lysine 430 bears the N6-succinyllysine mark. The active-site Proton acceptor is the histidine 487. Residue lysine 505 is modified to N6-acetyllysine; alternate. At lysine 505 the chain carries N6-succinyllysine; alternate.

Belongs to the class-I pyridine nucleotide-disulfide oxidoreductase family. In terms of assembly, homodimer. Part of the multimeric pyruvate dehydrogenase complex that contains multiple copies of pyruvate dehydrogenase (subunits PDHA (PDHA1 or PDHA2) and PDHB, E1), dihydrolipoamide acetyltransferase (DLAT, E2) and lipoamide dehydrogenase (DLD, E3). These subunits are bound to an inner core composed of about 48 DLAT and 12 PDHX molecules (by non covalent bonds). The 2-oxoglutarate dehydrogenase complex is composed of OGDH (2-oxoglutarate dehydrogenase; E1), DLST (dihydrolipoamide succinyltransferase; E2), DLD (dihydrolipoamide dehydrogenase; E3) and the assembly factor KGD4. It contains multiple copies of the three enzymatic components (E1, E2 and E3). In the nucleus, the 2-oxoglutarate dehydrogenase complex associates with KAT2A. Interacts with PDHX. FAD is required as a cofactor. In terms of processing, tyrosine phosphorylated.

The protein localises to the mitochondrion matrix. It localises to the nucleus. It is found in the cell projection. Its subcellular location is the cilium. The protein resides in the flagellum. The protein localises to the cytoplasmic vesicle. It localises to the secretory vesicle. It is found in the acrosome. The enzyme catalyses N(6)-[(R)-dihydrolipoyl]-L-lysyl-[protein] + NAD(+) = N(6)-[(R)-lipoyl]-L-lysyl-[protein] + NADH + H(+). Functionally, lipoamide dehydrogenase is a component of the glycine cleavage system as well as an E3 component of three alpha-ketoacid dehydrogenase complexes (pyruvate-, alpha-ketoglutarate-, and branched-chain amino acid-dehydrogenase complex). The 2-oxoglutarate dehydrogenase complex is mainly active in the mitochondrion. A fraction of the 2-oxoglutarate dehydrogenase complex also localizes in the nucleus and is required for lysine succinylation of histones: associates with KAT2A on chromatin and provides succinyl-CoA to histone succinyltransferase KAT2A. In monomeric form may have additional moonlighting function as serine protease. Involved in the hyperactivation of spermatazoa during capacitation and in the spermatazoal acrosome reaction. This chain is Dihydrolipoyl dehydrogenase, mitochondrial (DLD), found in Bos taurus (Bovine).